The primary structure comprises 87 residues: Small ribosomal subunit protein bS20 (87 aa).

The tract at residues 1 to 26 (MANIKSAKKRAVQSEKRRKHNASRRS) is disordered.

The protein belongs to the bacterial ribosomal protein bS20 family.

Binds directly to 16S ribosomal RNA. The sequence is that of Small ribosomal subunit protein bS20 from Yersinia enterocolitica serotype O:8 / biotype 1B (strain NCTC 13174 / 8081).